The sequence spans 215 residues: Cytochrome b6 (215 aa).

The Cytoplasmic portion of the chain corresponds to methionine 1–asparagine 31. The helical transmembrane segment at isoleucine 32–phenylalanine 52 threads the bilayer. Residue cysteine 35 coordinates heme c. Topologically, residues alanine 53 to serine 89 are lumenal, thylakoid. Heme b is bound by residues arginine 83, histidine 86, histidine 100, and arginine 103. The chain crosses the membrane as a helical span at residues alanine 90–phenylalanine 110. The Cytoplasmic segment spans residues lysine 111–glutamate 115. Residues leucine 116–tyrosine 136 traverse the membrane as a helical segment. Residues serine 137–serine 185 lie on the Lumenal, thylakoid side of the membrane. A helical membrane pass occupies residues alanine 186–isoleucine 206. Heme b is bound by residues histidine 187 and histidine 202. The Cytoplasmic portion of the chain corresponds to arginine 207–leucine 215. Position 208 (lysine 208) interacts with heme c.

The protein belongs to the cytochrome b family. PetB subfamily. As to quaternary structure, the 4 large subunits of the cytochrome b6-f complex are cytochrome b6, subunit IV (17 kDa polypeptide, PetD), cytochrome f and the Rieske protein, while the 4 small subunits are PetG, PetL, PetM and PetN. The complex functions as a dimer. Requires heme b as cofactor. Heme c serves as cofactor.

Its subcellular location is the cellular thylakoid membrane. Functionally, component of the cytochrome b6-f complex, which mediates electron transfer between photosystem II (PSII) and photosystem I (PSI), cyclic electron flow around PSI, and state transitions. The polypeptide is Cytochrome b6 (Mastigocladus laminosus (Fischerella sp.)).